We begin with the raw amino-acid sequence, 182 residues long: Oligoribonuclease (182 aa).

The Exonuclease domain maps to 8–171; it reads LIWIDLEMTG…DDIRESIKEL (164 aa). Tyr129 is a catalytic residue.

It belongs to the oligoribonuclease family.

The protein resides in the cytoplasm. 3'-to-5' exoribonuclease specific for small oligoribonucleotides. The protein is Oligoribonuclease of Haemophilus influenzae (strain 86-028NP).